The primary structure comprises 280 residues: Tumor necrosis factor ligand superfamily member 6 (280 aa).

The Cytoplasmic portion of the chain corresponds to 1–80; that stretch reads MQQPLNYPYP…KTRRDHNTGL (80 aa). Residues 20-71 are disordered; the sequence is SSPWGPPGSVLPCPSSVPGRPGQRRPPPPPPPTLPPPPPPPPLPPLPLPPLK. The span at 43-69 shows a compositional bias: pro residues; it reads RRPPPPPPPTLPPPPPPPPLPPLPLPP. The chain crosses the membrane as a helical; Signal-anchor for type II membrane protein span at residues 81–101; that stretch reads CLLVMFFMVLVALVGLGLGMF. The Extracellular segment spans residues 102–280; it reads QLFHLQKELA…SKTFFGLYKL (179 aa). The 137-residue stretch at 144-280 folds into the THD domain; sequence KVAHLTGKPN…SKTFFGLYKL (137 aa). N183 carries N-linked (GlcNAc...) asparagine glycosylation. C201 and C232 are joined by a disulfide. Residues N249 and N259 are each glycosylated (N-linked (GlcNAc...) asparagine).

It belongs to the tumor necrosis factor family. In terms of assembly, homotrimer. Interacts with ARHGAP9, BAIAP2L1, BTK, CACNB3, CACNB4, CRK, DLG2, DNMBP, DOCK4, EPS8L3, FGR, FYB1, FYN, HCK, ITK, ITSN2, KALRN, LYN, MACC1, MIA, MPP4, MYO15A, NCF1, NCK1, NCK2, NCKIPSD, OSTF1, PIK3R1, PSTPIP1, RIMBP3C, SAMSN1, SH3GL3, SH3PXD2B, SH3PXD2A, SH3RF2, SKAP2, SNX33, SNX9, SORBS3, SPTA1, SRC, SRGAP1, SRGAP2, SRGAP3, TEC, TJP3 and YES1. In terms of processing, the soluble form derives from the membrane form by proteolytic processing. The membrane-bound form undergoes two successive intramembrane proteolytic cleavages. The first one is processed by ADAM10 producing an N-terminal fragment, which lacks the receptor-binding extracellular domain. This ADAM10-processed FasL (FasL APL) remnant form is still membrane anchored and further processed by SPPL2A that liberates the FasL intracellular domain (FasL ICD). FasL shedding by ADAM10 is a prerequisite for subsequent intramembrane cleavage by SPPL2A in T-cells. Phosphorylated by FGR on tyrosine residues; this is required for ubiquitination and subsequent internalization. Post-translationally, N-glycosylated. Glycosylation enhances apoptotic activity. In terms of processing, monoubiquitinated.

The protein localises to the cell membrane. It localises to the cytoplasmic vesicle lumen. Its subcellular location is the lysosome lumen. The protein resides in the secreted. It is found in the nucleus. Functionally, cytokine that binds to TNFRSF6/FAS, a receptor that transduces the apoptotic signal into cells. Involved in cytotoxic T-cell-mediated apoptosis, natural killer cell-mediated apoptosis and in T-cell development. Initiates fratricidal/suicidal activation-induced cell death (AICD) in antigen-activated T-cells contributing to the termination of immune responses. TNFRSF6/FAS-mediated apoptosis has also a role in the induction of peripheral tolerance. Binds to TNFRSF6B/DcR3, a decoy receptor that blocks apoptosis. In terms of biological role, induces FAS-mediated activation of NF-kappa-B, initiating non-apoptotic signaling pathways. Can induce apoptosis but does not appear to be essential for this process. Its function is as follows. Cytoplasmic form induces gene transcription inhibition. In Felis catus (Cat), this protein is Tumor necrosis factor ligand superfamily member 6 (FASLG).